The following is a 601-amino-acid chain: Amino-acid acetyltransferase, mitochondrial (601 aa).

The 158-residue stretch at 401 to 558 folds into the N-acetyltransferase domain; the sequence is FTMDNLIASK…KKKQNNKKKK (158 aa).

This sequence belongs to the acetyltransferase family.

It is found in the mitochondrion. It carries out the reaction L-glutamate + acetyl-CoA = N-acetyl-L-glutamate + CoA + H(+). Its pathway is amino-acid biosynthesis; L-arginine biosynthesis; N(2)-acetyl-L-ornithine from L-glutamate: step 1/4. Functionally, N-acetylglutamate synthase involved in arginine biosynthesis. In Lodderomyces elongisporus (strain ATCC 11503 / CBS 2605 / JCM 1781 / NBRC 1676 / NRRL YB-4239) (Yeast), this protein is Amino-acid acetyltransferase, mitochondrial (ARG2).